Reading from the N-terminus, the 537-residue chain is Putative cysteine ligase BshC (537 aa).

The stretch at 383–451 (MERTQKLLKQ…EVKENQDNFN (69 aa)) forms a coiled coil.

Belongs to the BshC family.

Involved in bacillithiol (BSH) biosynthesis. May catalyze the last step of the pathway, the addition of cysteine to glucosamine malate (GlcN-Mal) to generate BSH. The polypeptide is Putative cysteine ligase BshC (Staphylococcus haemolyticus (strain JCSC1435)).